The sequence spans 111 residues: Large ribosomal subunit protein uL24 (111 aa).

It belongs to the universal ribosomal protein uL24 family. As to quaternary structure, part of the 50S ribosomal subunit.

In terms of biological role, one of two assembly initiator proteins, it binds directly to the 5'-end of the 23S rRNA, where it nucleates assembly of the 50S subunit. One of the proteins that surrounds the polypeptide exit tunnel on the outside of the subunit. This is Large ribosomal subunit protein uL24 from Chlamydia trachomatis serovar A (strain ATCC VR-571B / DSM 19440 / HAR-13).